The sequence spans 494 residues: MQKKYVVALDQGTTSSRAIVFDHDANIVSVSQREFTQLYPNPGWVEHDPMEIWASQSSVLIESLARAGIHSDAVAAIGITNQRETTIIWEKATGKPVYNAIVWQCRRSAEICEQLKAQGLEDYVRQNTGLLLDPYFSGTKIKWILDNVPDARAKAKRGELLFGTVDTWLLWKLTEGKVHVTDPTNAARTLLFNIHSLSWDSKLLEALDIPAAMLPEVKPSCSVYGTTRIAGEGSEIPLAGIAGDQQAALFGQLCVEQGMAKNTYGTGCFLLMNTGSKAVRSSHGLLTTVAVGAQGEVNYALEGSVFMGGATIQWLRDELGLIRDASDTEYFASKVADTNGVYLVPAFVGLGAPYWDPNARGALFGLTRGANRNHIIRAALESIAYQSKDLLDAMIKDSGVSLKRLKVDGGAVANDFLMQFQADITDVEVLRPSVCETTALGAAFLAGLAVGFWNSVTELEHKACIDTHFKPSINADYRQQLYAGWQDAVARTRS.

T13 serves as a coordination point for ADP. Residues T13, T14, and S15 each coordinate ATP. T13 is a binding site for sn-glycerol 3-phosphate. R17 lines the ADP pocket. Positions 83, 84, 135, and 244 each coordinate sn-glycerol 3-phosphate. Positions 83, 84, 135, 244, and 245 each coordinate glycerol. Residues T266 and G309 each contribute to the ADP site. Positions 266, 309, 313, and 410 each coordinate ATP. G410 and N414 together coordinate ADP.

It belongs to the FGGY kinase family.

The catalysed reaction is glycerol + ATP = sn-glycerol 3-phosphate + ADP + H(+). It participates in polyol metabolism; glycerol degradation via glycerol kinase pathway; sn-glycerol 3-phosphate from glycerol: step 1/1. Inhibited by fructose 1,6-bisphosphate (FBP). Functionally, key enzyme in the regulation of glycerol uptake and metabolism. Catalyzes the phosphorylation of glycerol to yield sn-glycerol 3-phosphate. This is Glycerol kinase from Shewanella oneidensis (strain ATCC 700550 / JCM 31522 / CIP 106686 / LMG 19005 / NCIMB 14063 / MR-1).